We begin with the raw amino-acid sequence, 34 residues long: Sperm protein EM1 (34 aa).

Positions 1–17 are enriched in basic residues; sequence AGSKSRSRSRSRSRSKS. Positions 1–34 are disordered; sequence AGSKSRSRSRSRSRSKSPAKSASPKSAASPRASR. 7 consecutive repeat copies span residues 3–4, 5–6, 7–8, 9–10, 11–12, 13–14, and 15–16. Positions 3–16 are 7 X 2 AA tandem repeats of S-[KR]; it reads SKSRSRSRSRSRSK. A compositionally biased stretch (low complexity) spans 18–34; it reads PAKSASPKSAASPRASR.

As to expression, sperm.

Its subcellular location is the nucleus. The protein is Sperm protein EM1 of Ensis minor (Razor shell).